Consider the following 496-residue polypeptide: Maturase K (496 aa).

It belongs to the intron maturase 2 family. MatK subfamily.

Its subcellular location is the plastid. It is found in the chloroplast. In terms of biological role, usually encoded in the trnK tRNA gene intron. Probably assists in splicing its own and other chloroplast group II introns. This Paeonia lactiflora (Chinese peony) protein is Maturase K.